Here is a 161-residue protein sequence, read N- to C-terminus: Large ribosomal subunit protein uL15 (161 aa).

Residues 1 to 43 are disordered; it reads MKLSEIADNVGSRKKRMRIGRGIGSGKGKTGGRGGKGQTARSG. Over residues 21-37 the composition is skewed to gly residues; sequence RGIGSGKGKTGGRGGKG.

As to quaternary structure, part of the 50S ribosomal subunit.

In terms of biological role, binds to the 23S rRNA. This Rhodopseudomonas palustris (strain ATCC BAA-98 / CGA009) protein is Large ribosomal subunit protein uL15.